A 639-amino-acid chain; its full sequence is MTLEITGSELIKSKLIDAPERSGVYRMFDVNKQVLYVGKAKNLKKRLTNYIKSNLDNKTLRMIANTCFLEYSITNSEVEALLLEAQLIKKFQPKFNILLKDCKSFPFIKLRLDHDFPQLLKYRGKTLSDGKFFGPFASSAEVNTTLTELQKIFKLRSCTDNYFNSRTRPCLQYEIKRCYAPCVGKINKEDYRDLVTQVKDFLQGRTKELQENLSRKMEELSSQMRFEEAAEIRDRIKALSYVQLKAGVSDVVKDADIIAIVEKNGHYCVEVFLYRAGQACGNIPYFPTSTENSTKEEVLEYFLLQFYQKQHVPAAIIINHEINDKENVIEAIKKINNILQINITVPNKGGKAKLVQNAETNALFSLEQYLKKFAKNQEIMFEIKELFGLSEIPERIEIYDNSHIQGKFAVGVMVVAGKVGFDKKEYRVFNVHAPSLVCHSRESGDPKRLMDSCFRGNGIKNCGGDIKGDDYEMLRQVLTRRLTRLRQEPHKLPSLMIIDGGKGHLGVVKEVMDKFEMNIPFVCMSKGVDRNAGFEQFHVIGKEVFTLDKNLPVMKYLQILRDEAHNFAIKNHRLGRSRAIKISRLDDIEGVGETRKKALLHYFGSYKAVCDATIYELAKVNGINKLLAEMIFNVLHRKN.

A GIY-YIG domain is found at 20–97 (ERSGVYRMFD…IKKFQPKFNI (78 aa)). The 36-residue stretch at 207-242 (KELQENLSRKMEELSSQMRFEEAAEIRDRIKALSYV) folds into the UVR domain.

The protein belongs to the UvrC family. Interacts with UvrB in an incision complex.

The protein resides in the cytoplasm. Its function is as follows. The UvrABC repair system catalyzes the recognition and processing of DNA lesions. UvrC both incises the 5' and 3' sides of the lesion. The N-terminal half is responsible for the 3' incision and the C-terminal half is responsible for the 5' incision. This Rickettsia africae (strain ESF-5) protein is UvrABC system protein C.